Reading from the N-terminus, the 500-residue chain is MTEQVQDENKLIAERRAKLDSIRPNCSANAHPNTFRRTHKAAELQEKYGQNTKEELEALGFRTSIAGRIMAKRGPFLVIQDVSGRIQAYAEKGVQADLKDRYQGLDIGDIIGVTGQLHLSGKGDLYVNMEEYQLLTKALRPLPEKFHGLTDQETRYRQRYVDLIVNEESRQAFVMRSKVVAAIRNFMIKKEFMEVETPMMHVIPGGASARPFITHHNALDMPMYLRIAPELYLKRLVVGGFERVFEINRNFRNEGLSPRHNPEFTMMEFYMAYADYKDLMDLTEELLSSIAIELLGSAQMPYGEHTVDFGGPYARLSMLEAIQKYNPDNATIQAMTYEQVKDLEFMRELAISLGIKIEKFWTCGQLLEEIFGETAEWQLMQPTFITGYPADISPLARRNDDNHFITDRFEFFIGGREVANGFSELNDAEDQDSRFKAQVDAKDAGDDEAMFYDADYITALEHGLPPTAGQGIGIDRLVMLFTNTHTIRDVILFPAMRPQA.

Mg(2+) is bound by residues Glu-410 and Glu-417.

It belongs to the class-II aminoacyl-tRNA synthetase family. Homodimer. The cofactor is Mg(2+).

It is found in the cytoplasm. It carries out the reaction tRNA(Lys) + L-lysine + ATP = L-lysyl-tRNA(Lys) + AMP + diphosphate. The sequence is that of Lysine--tRNA ligase from Shewanella putrefaciens (strain CN-32 / ATCC BAA-453).